We begin with the raw amino-acid sequence, 488 residues long: 3-octaprenyl-4-hydroxybenzoate carboxy-lyase (488 aa).

Asn172 provides a ligand contact to Mn(2+). Prenylated FMN-binding positions include 175-177 (IYR), 189-191 (RWL), and 194-195 (RG). Glu238 lines the Mn(2+) pocket. The Proton donor role is filled by Asp287.

It belongs to the UbiD family. In terms of assembly, homohexamer. Requires prenylated FMN as cofactor. The cofactor is Mn(2+).

The protein resides in the cell membrane. It carries out the reaction a 4-hydroxy-3-(all-trans-polyprenyl)benzoate + H(+) = a 2-(all-trans-polyprenyl)phenol + CO2. It participates in cofactor biosynthesis; ubiquinone biosynthesis. Catalyzes the decarboxylation of 3-octaprenyl-4-hydroxy benzoate to 2-octaprenylphenol, an intermediate step in ubiquinone biosynthesis. The polypeptide is 3-octaprenyl-4-hydroxybenzoate carboxy-lyase (Pseudomonas aeruginosa (strain LESB58)).